Reading from the N-terminus, the 203-residue chain is Probable GTP-binding protein EngB (203 aa).

The region spanning 24–199 (DGSEVAFAGR…HTVIETWLGL (176 aa)) is the EngB-type G domain. Residues 32 to 39 (GRSNAGKS), 59 to 63 (GRTQQ), 77 to 80 (DLPG), 144 to 147 (TKAD), and 178 to 180 (FSS) contribute to the GTP site. Positions 39 and 61 each coordinate Mg(2+).

It belongs to the TRAFAC class TrmE-Era-EngA-EngB-Septin-like GTPase superfamily. EngB GTPase family. Mg(2+) is required as a cofactor.

Necessary for normal cell division and for the maintenance of normal septation. The sequence is that of Probable GTP-binding protein EngB from Xylella fastidiosa (strain Temecula1 / ATCC 700964).